The following is a 90-amino-acid chain: Small ribosomal subunit protein bS20 (90 aa).

Residues 1–27 are disordered; sequence MANSAQAKKRARQNEKRELHNASQRSA.

The protein belongs to the bacterial ribosomal protein bS20 family.

Its function is as follows. Binds directly to 16S ribosomal RNA. This Coxiella burnetii (strain CbuK_Q154) (Coxiella burnetii (strain Q154)) protein is Small ribosomal subunit protein bS20.